Reading from the N-terminus, the 145-residue chain is Probable DNA-directed RNA polymerases I and III subunit RPAC2 (145 aa).

A disordered region spans residues 1 to 52 (MGKKSEKKVVEETMEVDEQPAVEPEAVPEEEPEVEDEDLNVPKKKKMEILDP). The segment covering 12–39 (ETMEVDEQPAVEPEAVPEEEPEVEDEDL) has biased composition (acidic residues).

It belongs to the archaeal Rpo11/eukaryotic RPB11/RPC19 RNA polymerase subunit family. Component of the RNA polymerase I (Pol I) and RNA polymerase III (Pol III) complexes consisting of at least 13 and 17 subunits, respectively.

Its subcellular location is the nucleus. DNA-dependent RNA polymerase catalyzes the transcription of DNA into RNA using the four ribonucleoside triphosphates as substrates. Common core component of RNA polymerases I and III which synthesize ribosomal RNA precursors and small RNAs, such as 5S rRNA and tRNAs, respectively. The chain is Probable DNA-directed RNA polymerases I and III subunit RPAC2 (rpac-19) from Caenorhabditis briggsae.